A 65-amino-acid chain; its full sequence is Large ribosomal subunit protein bL35 (65 aa).

Residues 1–26 form a disordered region; sequence MPKMKSNKGASKRFKKTASGGFKCKQ.

The protein belongs to the bacterial ribosomal protein bL35 family.

This chain is Large ribosomal subunit protein bL35, found in Idiomarina loihiensis (strain ATCC BAA-735 / DSM 15497 / L2-TR).